The following is a 331-amino-acid chain: Ubiquinone biosynthesis protein UbiU (331 aa).

4 residues coordinate [4Fe-4S] cluster: C169, C176, C193, and C232.

Belongs to the peptidase U32 family. UbiU subfamily. As to quaternary structure, forms a heterodimer with UbiV. [4Fe-4S] cluster serves as cofactor.

It functions in the pathway cofactor biosynthesis; ubiquinone biosynthesis. In terms of biological role, required for O(2)-independent ubiquinone (coenzyme Q) biosynthesis. Together with UbiV, is essential for the C6-hydroxylation reaction in the oxygen-independent ubiquinone biosynthesis pathway. This chain is Ubiquinone biosynthesis protein UbiU, found in Escherichia coli (strain K12).